A 585-amino-acid chain; its full sequence is uncharacterized protein (585 aa).

The protein to E.coli YejM.

This is an uncharacterized protein from Haemophilus influenzae (strain ATCC 51907 / DSM 11121 / KW20 / Rd).